The sequence spans 427 residues: V-type proton ATPase subunit C 2 (427 aa).

The disordered stretch occupies residues 292 to 319; sequence HKVKVTPLGNPDRPAAGQTDRERESEGE.

Belongs to the V-ATPase C subunit family. V-ATPase is a heteromultimeric enzyme made up of two complexes: the ATP-hydrolytic V1 complex and the proton translocation V0 complex. The V1 complex consists of three catalytic AB heterodimers that form a heterohexamer, three peripheral stalks each consisting of EG heterodimers, one central rotor including subunits D and F, and the regulatory subunits C and H. The proton translocation complex V0 consists of the proton transport subunit a, a ring of proteolipid subunits c9c'', rotary subunit d, subunits e and f, and the accessory subunits ATP6AP1/Ac45 and ATP6AP2/PRR. In terms of tissue distribution, kidney and placenta.

Its function is as follows. Subunit of the V1 complex of vacuolar(H+)-ATPase (V-ATPase), a multisubunit enzyme composed of a peripheral complex (V1) that hydrolyzes ATP and a membrane integral complex (V0) that translocates protons. V-ATPase is responsible for acidifying and maintaining the pH of intracellular compartments and in some cell types, is targeted to the plasma membrane, where it is responsible for acidifying the extracellular environment. Subunit C is necessary for the assembly of the catalytic sector of the enzyme and is likely to have a specific function in its catalytic activity. This is V-type proton ATPase subunit C 2 (ATP6V1C2) from Homo sapiens (Human).